The primary structure comprises 389 residues: Phenylpropanoylacetyl-CoA synthase (389 aa).

Residue Cys163 is part of the active site.

It belongs to the thiolase-like superfamily. Chalcone/stilbene synthases family. In terms of assembly, homodimer. Expressed in both the leaf and rhizome, with higher expression in the rhizome.

It carries out the reaction (E)-feruloyl-CoA + malonyl-CoA + H(+) = (E)-feruloylacetyl-CoA + CO2 + CoA. The catalysed reaction is 4-coumaroyl-CoA + malonyl-CoA + H(+) = (4-coumaroyl)acetyl-CoA + CO2 + CoA. It functions in the pathway secondary metabolite biosynthesis; flavonoid biosynthesis. In terms of biological role, catalyzes the formation of feruloyldiketide-CoA by condensing feruloyl-CoA and malonyl-CoA in the curcuminoid biosynthesis. Has no activity with cinnamoyl-CoA. The polypeptide is Phenylpropanoylacetyl-CoA synthase (DCS) (Curcuma longa (Turmeric)).